Reading from the N-terminus, the 329-residue chain is HTH-type transcriptional regulator ArgR (329 aa).

The region spanning 214-312 is the HTH araC/xylS-type domain; that stretch reads TQAVLLMEAN…GVTPREDRNQ (99 aa). DNA-binding regions (H-T-H motif) lie at residues 231 to 252 and 279 to 302; these read DEIA…KQYL and IIQI…RNFF. The disordered stretch occupies residues 307 to 329; that stretch reads REDRNQRRGGSAFETTFTPVERG. Positions 319 to 329 are enriched in polar residues; sequence FETTFTPVERG.

Functionally, argR could be a transcriptional activator of the dauBAR operon in response to the presence of L-Arg. The sequence is that of HTH-type transcriptional regulator ArgR (argR) from Pseudomonas aeruginosa (strain ATCC 15692 / DSM 22644 / CIP 104116 / JCM 14847 / LMG 12228 / 1C / PRS 101 / PAO1).